A 321-amino-acid chain; its full sequence is Cilia- and flagella-associated protein 161 (321 aa).

The disordered stretch occupies residues 275 to 321 (LSTMLDLPKPPAEDTRALEQEREQVSDPGARSTPDARGCVPQCTLPM). Basic and acidic residues predominate over residues 285–299 (PAEDTRALEQEREQV).

In terms of assembly, microtubule inner protein component of sperm flagellar doublet microtubules. As to expression, expressed in trachea multiciliated cells.

The protein localises to the cytoplasm. Its subcellular location is the cytoskeleton. It is found in the cilium axoneme. It localises to the flagellum axoneme. Functionally, microtubule inner protein (MIP) part of the dynein-decorated doublet microtubules (DMTs) in cilia axoneme, which is required for motile cilia beating. In Bos taurus (Bovine), this protein is Cilia- and flagella-associated protein 161.